A 471-amino-acid polypeptide reads, in one-letter code: Alpha-1,3/1,6-mannosyltransferase alg-2 (471 aa).

N-linked (GlcNAc...) asparagine glycans are attached at residues N178 and N279. The chain crosses the membrane as a helical span at residues 446 to 466; sequence GMILLVVGAAVAAVAGVISAV.

The protein belongs to the glycosyltransferase group 1 family. Glycosyltransferase 4 subfamily.

The protein resides in the endoplasmic reticulum membrane. The enzyme catalyses a beta-D-Man-(1-&gt;4)-beta-D-GlcNAc-(1-&gt;4)-alpha-D-GlcNAc-diphospho-di-trans,poly-cis-dolichol + GDP-alpha-D-mannose = an alpha-D-Man-(1-&gt;3)-beta-D-Man-(1-&gt;4)-beta-D-GlcNAc-(1-&gt;4)-alpha-D-GlcNAc-diphospho-di-trans,poly-cis-dolichol + GDP + H(+). It carries out the reaction an alpha-D-Man-(1-&gt;3)-beta-D-Man-(1-&gt;4)-beta-D-GlcNAc-(1-&gt;4)-alpha-D-GlcNAc-diphospho-di-trans,poly-cis-dolichol + GDP-alpha-D-mannose = an alpha-D-Man-(1-&gt;3)-[alpha-D-Man-(1-&gt;6)]-beta-D-Man-(1-&gt;4)-beta-D-GlcNAc-(1-&gt;4)-alpha-D-GlcNAc-diphospho-di-trans,poly-cis-dolichol + GDP + H(+). Its pathway is protein modification; protein glycosylation. Mannosylates Man(2)GlcNAc(2)-dolichol diphosphate and Man(1)GlcNAc(2)-dolichol diphosphate to form Man(3)GlcNAc(2)-dolichol diphosphate. The polypeptide is Alpha-1,3/1,6-mannosyltransferase alg-2 (alg-2) (Neurospora crassa (strain ATCC 24698 / 74-OR23-1A / CBS 708.71 / DSM 1257 / FGSC 987)).